The following is a 384-amino-acid chain: Ribosomal RNA large subunit methyltransferase G (384 aa).

Belongs to the methyltransferase superfamily. RlmG family.

Its subcellular location is the cytoplasm. The catalysed reaction is guanosine(1835) in 23S rRNA + S-adenosyl-L-methionine = N(2)-methylguanosine(1835) in 23S rRNA + S-adenosyl-L-homocysteine + H(+). Functionally, specifically methylates the guanine in position 1835 (m2G1835) of 23S rRNA. In Streptomyces griseus subsp. griseus (strain JCM 4626 / CBS 651.72 / NBRC 13350 / KCC S-0626 / ISP 5235), this protein is Ribosomal RNA large subunit methyltransferase G.